A 141-amino-acid polypeptide reads, in one-letter code: Protein stum homolog (141 aa).

Ser-26 carries the phosphoserine modification. Helical transmembrane passes span 51–71 and 87–107; these read FPVA…GTFV and RHVC…VLTA.

The protein belongs to the SPEC3 family. Stum subfamily.

The protein localises to the membrane. In Mus musculus (Mouse), this protein is Protein stum homolog.